We begin with the raw amino-acid sequence, 430 residues long: MASPVPIQRLQAPLRRSLARAAALSTRSYATIPSGPSSQPTSQESSSAASASAPATKPRPTYFKDTTLASLDDFIANQSSAAPLAPSEAYTLRTAEVGPAGKKRTITRLPEWLKTPIPSAGANPEFAKIKADLRGLNLHTVCEEARCPNIGECWGGSNKAAATATIMLMGDTCTRGCRFCSVKTSRKPPPLDPHEPENTAEALARWGLGYVVLTSVDRDDLADGGARHFAETIRRIKQKKPTLLVEALTGDFAGDLDMVKIVAESGLDVYAHNVETVENLTPYVRDRRATFRQSLKVLEHVKKVRGKEGIITKTSIMLGLGETEEELWEALRELRKVDVDVVTFGQYMRPTKRHLAVEKYITPDEFELWRQRALDMGFLYCASGPLVRSSYKAGEAFIENVLRKRSGEKVVSEALGQAVAAEEATSVQSS.

Residues 1–29 constitute a mitochondrion transit peptide; it reads MASPVPIQRLQAPLRRSLARAAALSTRSY. The span at 28–58 shows a compositional bias: low complexity; that stretch reads SYATIPSGPSSQPTSQESSSAASASAPATKP. Positions 28–62 are disordered; it reads SYATIPSGPSSQPTSQESSSAASASAPATKPRPTY. Positions 142, 147, 153, 173, 177, 180, and 390 each coordinate [4Fe-4S] cluster. The 224-residue stretch at 156-379 folds into the Radical SAM core domain; the sequence is GSNKAAATAT…RQRALDMGFL (224 aa).

Belongs to the radical SAM superfamily. Lipoyl synthase family. The cofactor is [4Fe-4S] cluster.

Its subcellular location is the mitochondrion. It carries out the reaction [[Fe-S] cluster scaffold protein carrying a second [4Fe-4S](2+) cluster] + N(6)-octanoyl-L-lysyl-[protein] + 2 oxidized [2Fe-2S]-[ferredoxin] + 2 S-adenosyl-L-methionine + 4 H(+) = [[Fe-S] cluster scaffold protein] + N(6)-[(R)-dihydrolipoyl]-L-lysyl-[protein] + 4 Fe(3+) + 2 hydrogen sulfide + 2 5'-deoxyadenosine + 2 L-methionine + 2 reduced [2Fe-2S]-[ferredoxin]. The protein operates within protein modification; protein lipoylation via endogenous pathway; protein N(6)-(lipoyl)lysine from octanoyl-[acyl-carrier-protein]: step 2/2. Catalyzes the radical-mediated insertion of two sulfur atoms into the C-6 and C-8 positions of the octanoyl moiety bound to the lipoyl domains of lipoate-dependent enzymes, thereby converting the octanoylated domains into lipoylated derivatives. The chain is Lipoyl synthase, mitochondrial from Neurospora crassa (strain ATCC 24698 / 74-OR23-1A / CBS 708.71 / DSM 1257 / FGSC 987).